A 167-amino-acid chain; its full sequence is Photosystem I assembly protein Ycf3 (167 aa).

3 TPR repeats span residues 35–68, 72–105, and 120–153; these read AFTYYREGMSAQSEGEYAEALQNYYEAMRLEVDA, SYIFYNIGLIHTSNGEHARALEYYYQALERNPSL, and GEQAIENGQAEISKMLFDKAADYWKEAIRLAPTN.

It belongs to the Ycf3 family.

It localises to the plastid. It is found in the chloroplast thylakoid membrane. Functionally, essential for the assembly of the photosystem I (PSI) complex. May act as a chaperone-like factor to guide the assembly of the PSI subunits. This Pleurastrum terricola (Filamentous green alga) protein is Photosystem I assembly protein Ycf3.